The sequence spans 412 residues: Argininosuccinate synthase (412 aa).

Residues 15 to 23 (AYSGGLDTS) and Ala42 contribute to the ATP site. Positions 93 and 98 each coordinate L-citrulline. Gly123 contributes to the ATP binding site. L-aspartate contacts are provided by Thr125, Asn129, and Asp130. Asn129 contributes to the L-citrulline binding site. L-citrulline is bound by residues Arg133, Ser185, Ser194, Glu270, and Tyr282.

Belongs to the argininosuccinate synthase family. Type 1 subfamily. In terms of assembly, homotetramer.

The protein resides in the cytoplasm. The enzyme catalyses L-citrulline + L-aspartate + ATP = 2-(N(omega)-L-arginino)succinate + AMP + diphosphate + H(+). Its pathway is amino-acid biosynthesis; L-arginine biosynthesis; L-arginine from L-ornithine and carbamoyl phosphate: step 2/3. The polypeptide is Argininosuccinate synthase (Psychrobacter cryohalolentis (strain ATCC BAA-1226 / DSM 17306 / VKM B-2378 / K5)).